The primary structure comprises 218 residues: Peptide deformylase (218 aa).

2 residues coordinate Fe cation: Cys130 and His172. The active site involves Glu173. His176 serves as a coordination point for Fe cation.

The protein belongs to the polypeptide deformylase family. The cofactor is Fe(2+).

The catalysed reaction is N-terminal N-formyl-L-methionyl-[peptide] + H2O = N-terminal L-methionyl-[peptide] + formate. Its function is as follows. Removes the formyl group from the N-terminal Met of newly synthesized proteins. Requires at least a dipeptide for an efficient rate of reaction. N-terminal L-methionine is a prerequisite for activity but the enzyme has broad specificity at other positions. The polypeptide is Peptide deformylase (Bifidobacterium adolescentis (strain ATCC 15703 / DSM 20083 / NCTC 11814 / E194a)).